A 46-amino-acid chain; its full sequence is Alpha-1-antiproteinase (46 aa).

Position 30 is a phosphoserine (serine 30).

This sequence belongs to the serpin family. In terms of processing, N-glycosylated; contains bi- and triantennary glycans with a bisecting N-acetylglucosamine and fucose residue. As to expression, plasma.

Its subcellular location is the secreted. The protein is Alpha-1-antiproteinase of Notamacropus eugenii (Tammar wallaby).